The primary structure comprises 77 residues: Acyl carrier protein (77 aa).

A Carrier domain is found at 2–77; sequence AEVFDRVKEI…DAVDYINSKA (76 aa). Ser37 carries the post-translational modification O-(pantetheine 4'-phosphoryl)serine.

Belongs to the acyl carrier protein (ACP) family. Post-translationally, 4'-phosphopantetheine is transferred from CoA to a specific serine of apo-ACP by AcpS. This modification is essential for activity because fatty acids are bound in thioester linkage to the sulfhydryl of the prosthetic group.

It is found in the cytoplasm. It functions in the pathway lipid metabolism; fatty acid biosynthesis. Functionally, carrier of the growing fatty acid chain in fatty acid biosynthesis. The sequence is that of Acyl carrier protein from Oceanobacillus iheyensis (strain DSM 14371 / CIP 107618 / JCM 11309 / KCTC 3954 / HTE831).